A 493-amino-acid chain; its full sequence is ATP synthase subunit beta (493 aa).

Residue 169–176 (GGAGVGKT) coordinates ATP.

The protein belongs to the ATPase alpha/beta chains family. In terms of assembly, F-type ATPases have 2 components, CF(1) - the catalytic core - and CF(0) - the membrane proton channel. CF(1) has five subunits: alpha(3), beta(3), gamma(1), delta(1), epsilon(1). CF(0) has three main subunits: a(1), b(2) and c(9-12). The alpha and beta chains form an alternating ring which encloses part of the gamma chain. CF(1) is attached to CF(0) by a central stalk formed by the gamma and epsilon chains, while a peripheral stalk is formed by the delta and b chains.

The protein localises to the cell inner membrane. It carries out the reaction ATP + H2O + 4 H(+)(in) = ADP + phosphate + 5 H(+)(out). In terms of biological role, produces ATP from ADP in the presence of a proton gradient across the membrane. The catalytic sites are hosted primarily by the beta subunits. The sequence is that of ATP synthase subunit beta from Gluconacetobacter diazotrophicus (strain ATCC 49037 / DSM 5601 / CCUG 37298 / CIP 103539 / LMG 7603 / PAl5).